We begin with the raw amino-acid sequence, 432 residues long: Adenylosuccinate synthetase (432 aa).

GTP contacts are provided by residues 12-18 (GDEGKGK) and 40-42 (GHT). Residue aspartate 13 is the Proton acceptor of the active site. Residues aspartate 13 and glycine 40 each contribute to the Mg(2+) site. Residues 13–16 (DEGK), 38–41 (NAGH), threonine 130, arginine 144, glutamine 226, threonine 241, and arginine 305 each bind IMP. The active-site Proton donor is histidine 41. 301-307 (STTGRSR) is a binding site for substrate. GTP contacts are provided by residues arginine 307, 333-335 (KLD), and 415-417 (SVG).

It belongs to the adenylosuccinate synthetase family. As to quaternary structure, homodimer. The cofactor is Mg(2+).

The protein localises to the cytoplasm. It carries out the reaction IMP + L-aspartate + GTP = N(6)-(1,2-dicarboxyethyl)-AMP + GDP + phosphate + 2 H(+). It functions in the pathway purine metabolism; AMP biosynthesis via de novo pathway; AMP from IMP: step 1/2. In terms of biological role, plays an important role in the de novo pathway of purine nucleotide biosynthesis. Catalyzes the first committed step in the biosynthesis of AMP from IMP. The sequence is that of Adenylosuccinate synthetase from Bdellovibrio bacteriovorus (strain ATCC 15356 / DSM 50701 / NCIMB 9529 / HD100).